Reading from the N-terminus, the 1846-residue chain is C2 domain-containing protein (1846 aa).

The interval 16 to 36 is disordered; sequence NTEKEEGKNAEINENNDPNTQ. Basic and acidic residues predominate over residues 17-26; the sequence is TEKEEGKNAE. The segment covering 27 to 36 has biased composition (polar residues); the sequence is INENNDPNTQ. One can recognise a C2 domain in the interval 497–623; it reads VPRYRQRGDI…FNEKNVRRNK (127 aa). Basic and acidic residues-rich tracts occupy residues 1193 to 1211 and 1230 to 1243; these read DEHT…DNYK and KDDH…KVSK. 5 disordered regions span residues 1193 to 1244, 1346 to 1370, 1456 to 1635, 1652 to 1692, and 1827 to 1846; these read DEHT…VSKS, KYTI…KKQD, KNER…KKRV, NEKM…NNER, and EEPS…VRKN. A coiled-coil region spans residues 1349–1506; it reads INEKRDDIKT…DENMKEEQKM (158 aa). Basic and acidic residues-rich tracts occupy residues 1456-1474, 1481-1629, 1652-1663, and 1670-1692; these read KNER…QKDK, ESRD…MRRE, NEKMKKKEEKEE, and KEDI…NNER. The span at 1834-1846 shows a compositional bias: basic residues; that stretch reads SPQKKKIVIVRKN.

The protein localises to the membrane. In terms of biological role, binds calcium and phospholipids. Regulates microneme secretion. This Plasmodium falciparum (isolate 3D7) protein is C2 domain-containing protein.